The chain runs to 277 residues: Antigen 1 (277 aa).

Residues 1 to 16 (MQLLALTLALCASIAA) form the signal peptide. N-linked (GlcNAc...) asparagine glycosylation is found at asparagine 41, asparagine 71, asparagine 127, and asparagine 200. Residues 230–277 (CVGGEEENDGQGEEQTEEPAQDDQQDEAAEEEIPENCHTHEGGELHCT) form a disordered region. Residues 233 to 263 (GEEENDGQGEEQTEEPAQDDQQDEAAEEEIP) are compositionally biased toward acidic residues. The segment covering 264 to 277 (ENCHTHEGGELHCT) has biased composition (basic and acidic residues).

Belongs to the ZPS1 family.

This chain is Antigen 1 (aspnd1), found in Emericella nidulans (strain FGSC A4 / ATCC 38163 / CBS 112.46 / NRRL 194 / M139) (Aspergillus nidulans).